The sequence spans 275 residues: Lysosome-associated membrane glycoprotein 5 (275 aa).

Residues 1–18 form the signal peptide; that stretch reads MEFQLLLLCSVWALGVCA. The Extracellular segment spans residues 19-228; it reads EQEVENLSGL…VTDQREQLEQ (210 aa). N-linked (GlcNAc...) asparagine glycans are attached at residues Asn24 and Asn42. A helical transmembrane segment spans residues 229-249; it reads TLPLVLGLILGLIIVITISVY. The Cytoplasmic portion of the chain corresponds to 250-275; that stretch reads HFHLKLNAAHTQQPTLPRDRSLYKNM.

This sequence belongs to the LAMP family. Glycosylated.

The protein resides in the cytoplasmic vesicle membrane. The protein localises to the cell membrane. Its subcellular location is the cell projection. It localises to the dendrite. It is found in the cytoplasmic vesicle. The protein resides in the secretory vesicle. The protein localises to the synaptic vesicle membrane. Its subcellular location is the growth cone membrane. It localises to the early endosome membrane. It is found in the recycling endosome. The protein resides in the endoplasmic reticulum-Golgi intermediate compartment membrane. The protein localises to the endosome membrane. In terms of biological role, plays a role in short-term synaptic plasticity in a subset of GABAergic neurons in the brain. The protein is Lysosome-associated membrane glycoprotein 5 (lamp5) of Danio rerio (Zebrafish).